Consider the following 422-residue polypeptide: Serine--tRNA ligase (422 aa).

230–232 (TAE) is an L-serine binding site. 261 to 263 (RAE) provides a ligand contact to ATP. Glu284 is a binding site for L-serine. Residue 348-351 (EISS) coordinates ATP. Residue Ser383 participates in L-serine binding.

Belongs to the class-II aminoacyl-tRNA synthetase family. Type-1 seryl-tRNA synthetase subfamily. In terms of assembly, homodimer. The tRNA molecule binds across the dimer.

The protein resides in the cytoplasm. It carries out the reaction tRNA(Ser) + L-serine + ATP = L-seryl-tRNA(Ser) + AMP + diphosphate + H(+). It catalyses the reaction tRNA(Sec) + L-serine + ATP = L-seryl-tRNA(Sec) + AMP + diphosphate + H(+). The protein operates within aminoacyl-tRNA biosynthesis; selenocysteinyl-tRNA(Sec) biosynthesis; L-seryl-tRNA(Sec) from L-serine and tRNA(Sec): step 1/1. Its function is as follows. Catalyzes the attachment of serine to tRNA(Ser). Is also able to aminoacylate tRNA(Sec) with serine, to form the misacylated tRNA L-seryl-tRNA(Sec), which will be further converted into selenocysteinyl-tRNA(Sec). The protein is Serine--tRNA ligase of Pelotomaculum thermopropionicum (strain DSM 13744 / JCM 10971 / SI).